Consider the following 238-residue polypeptide: Uridylate kinase (238 aa).

ATP is bound at residue 12–15; that stretch reads KLSG. The segment at 20 to 25 is involved in allosteric activation by GTP; the sequence is GQQGFG. Gly54 lines the UMP pocket. Positions 55 and 59 each coordinate ATP. UMP contacts are provided by residues Asp74 and 135–142; that span reads TGNPFFTT. Residues Thr162, Asn163, Tyr168, and Asp171 each contribute to the ATP site.

It belongs to the UMP kinase family. Homohexamer.

It is found in the cytoplasm. The enzyme catalyses UMP + ATP = UDP + ADP. The protein operates within pyrimidine metabolism; CTP biosynthesis via de novo pathway; UDP from UMP (UMPK route): step 1/1. Allosterically activated by GTP. Inhibited by UTP. In terms of biological role, catalyzes the reversible phosphorylation of UMP to UDP. In Bradyrhizobium diazoefficiens (strain JCM 10833 / BCRC 13528 / IAM 13628 / NBRC 14792 / USDA 110), this protein is Uridylate kinase.